Consider the following 56-residue polypeptide: MKFIVLLLIVTSVLMMFAVTTEASPQVNHKIERAKCGQKGKCYDGVNVQCIDCNTG.

Residues 1 to 25 (MKFIVLLLIVTSVLMMFAVTTEASP) form the signal peptide. At Gln-26 the chain carries Pyrrolidone carboxylic acid. Thr-55 carries the post-translational modification Threonine amide.

Belongs to the caterpillar 2 family. In terms of processing, contains 2 disulfide bonds. Expressed by the venom apparatus.

The protein resides in the secreted. In terms of biological role, probable toxin. In Megalopyge opercularis (Southern flannel moth), this protein is U-megalopygitoxin(2)-Mo9.